The chain runs to 816 residues: Probable E3 ubiquitin-protein ligase hulA (816 aa).

The C2 domain maps to 1-112; that stretch reads MGSNLPAQPN…QMGGDEMLTR (112 aa). Disordered regions lie at residues 134–238 and 254–354; these read NLST…GWER and RTTT…YFVD. Positions 160-178 are enriched in low complexity; it reads VPQVAPSSSHPAASGAAPV. Residues 181-192 show a composition bias toward polar residues; that stretch reads SASNPSLNPQRV. Residues 193 to 213 are compositionally biased toward low complexity; the sequence is PSTTRPSSTAAPASAAGAAAS. Composition is skewed to polar residues over residues 214–227 and 254–267; these read NTHGSRTNLSSFED and RTTTWTRPSSNYNE. Positions 230–263 constitute a WW 1 domain; that stretch reads GRLPAGWERREDNLGRTYYVDHNTRTTTWTRPSS. Residues 268 to 295 are compositionally biased toward basic and acidic residues; the sequence is HAQRSQREANMQLERRAHQSRMLPEDRT. Positions 296-310 are enriched in polar residues; it reads GANSPNLPESSQQAH. Low complexity predominate over residues 325–334; it reads ATGATTAGTG. WW domains follow at residues 334–367 and 394–427; these read GELPPGWEQRTTPEGRPYFVDHNTRTTTWVDPRR and GPLPSGWEMRLTNTARVYFVDHNTKTTTWDDPRL. An HECT domain is found at 483 to 816; it reads SASDLKKRLM…VEETLGFGQE (334 aa). The Glycyl thioester intermediate role is filled by Cys-784.

The protein belongs to the RSP5/NEDD4 family. In terms of assembly, interacts with creD.

The protein resides in the cytoplasm. It catalyses the reaction S-ubiquitinyl-[E2 ubiquitin-conjugating enzyme]-L-cysteine + [acceptor protein]-L-lysine = [E2 ubiquitin-conjugating enzyme]-L-cysteine + N(6)-ubiquitinyl-[acceptor protein]-L-lysine.. It participates in protein modification; protein ubiquitination. In terms of biological role, E3 ubiquitin-protein ligase which accepts ubiquitin from an E2 ubiquitin-conjugating enzyme in the form of a thioester and then directly transfers the ubiquitin to targeted substrates. Probably involved in the regulatory network controlling carbon source utilization. This is Probable E3 ubiquitin-protein ligase hulA (hulA) from Neosartorya fischeri (strain ATCC 1020 / DSM 3700 / CBS 544.65 / FGSC A1164 / JCM 1740 / NRRL 181 / WB 181) (Aspergillus fischerianus).